Here is a 509-residue protein sequence, read N- to C-terminus: Cytochrome P450 monooxygenase alt3 (509 aa).

A helical membrane pass occupies residues 25–45 (IITGIIVLPVLYVLLKVIYNL). Cys-450 serves as a coordination point for heme.

This sequence belongs to the cytochrome P450 family. Heme is required as a cofactor.

Its subcellular location is the membrane. It participates in secondary metabolite biosynthesis. Functionally, cytochrome P450 monooxygenase; part of the gene cluster that mediates the biosynthesis of alternapyrone derivatives. Alternapyrone is a decaketide with octa-methylation from methionine on every C2 unit except the third unit. All the domains in the polyketide synthase alt5 are apparently involved in alternapyrone synthesis, that is, the 8 CMeT, 7 KR, 7 DH, and 4 ER reactions in the 9 KS-mediated condensation steps required for alternapyrone synthesis. the alternapyrone produced by alt5 might be intensively modified by cytochrome P450 monooxygenases alt1, alt2 and alt3 and FAD-dependent oxidoreductase alt4 present in the alt gene cluster. This chain is Cytochrome P450 monooxygenase alt3, found in Alternaria solani.